The chain runs to 136 residues: Methenyltetrahydromethanopterin cyclohydrolase (136 aa).

Belongs to the MCH family.

It is found in the cytoplasm. The enzyme catalyses 5,10-methenyl-5,6,7,8-tetrahydromethanopterin + H2O = N(5)-formyl-5,6,7,8-tetrahydromethanopterin + H(+). It functions in the pathway one-carbon metabolism; formaldehyde degradation; formate from formaldehyde (H(4)MPT route): step 3/5. Functionally, catalyzes the hydrolysis of methenyl-H(4)MPT(+) to 5-formyl-H(4)MPT. The polypeptide is Methenyltetrahydromethanopterin cyclohydrolase (mch) (Methylococcus thermophilus).